A 292-amino-acid chain; its full sequence is Ribonuclease HIII (292 aa).

The RNase H type-2 domain occupies 76-292 (TNLIGTDEVG…TQKAMKIAQL (217 aa)). Asp82, Glu83, and Asp186 together coordinate a divalent metal cation.

It belongs to the RNase HII family. RnhC subfamily. The cofactor is Mn(2+). Mg(2+) is required as a cofactor.

The protein resides in the cytoplasm. The catalysed reaction is Endonucleolytic cleavage to 5'-phosphomonoester.. In terms of biological role, endonuclease that specifically degrades the RNA of RNA-DNA hybrids. This is Ribonuclease HIII from Lactococcus lactis subsp. cremoris (strain SK11).